A 785-amino-acid chain; its full sequence is uncharacterized protein (785 aa).

The DOD-type homing endonuclease domain occupies 293 to 421 (LVGYFLSEGY…LRLISLRLGF (129 aa)).

Post-translationally, this protein undergoes a protein self splicing that involves a post-translational excision of the intervening region (intein) followed by peptide ligation.

This is an uncharacterized protein from Methanocaldococcus jannaschii (strain ATCC 43067 / DSM 2661 / JAL-1 / JCM 10045 / NBRC 100440) (Methanococcus jannaschii).